A 231-amino-acid chain; its full sequence is Ferritin light chain (231 aa).

The N-terminal stretch at 1 to 19 (MKMLILAVSCLLAITGSLA) is a signal peptide. C23 and C43 are joined by a disulfide. A Ferritin-like diiron domain is found at 50–208 (YGSHGNVATE…GHTSDLKKFI (159 aa)). N-linked (GlcNAc...) asparagine glycosylation occurs at N134.

This sequence belongs to the ferritin family. Oligomer of 12 light (L) chains and 12 heavy (H) chains; L and H chains are disulfide-linked. The functional molecule forms a roughly spherical shell with a diameter of 12 nm and contains a central cavity into which the insoluble ferric iron core is deposited.

The protein resides in the golgi apparatus. It localises to the secreted. Its function is as follows. Stores iron in a soluble, non-toxic, readily available form. Important for iron homeostasis. Iron is taken up in the ferrous form and deposited as ferric hydroxides after oxidation. Ferritin is composed of a heavy (H) chain which is responsible for the oxidation and uptake of ferrous iron, and a light (L) chain which facilitates the nucleation of the ferrihydrite iron core. This Trichoplusia ni (Cabbage looper) protein is Ferritin light chain.